The chain runs to 154 residues: Urease accessory protein UreE (154 aa).

The interval 135–154 (PENGAYHGTGGHHHHHHDHE) is disordered. Positions 144-154 (GGHHHHHHDHE) are enriched in basic residues.

Belongs to the UreE family.

It is found in the cytoplasm. In terms of biological role, involved in urease metallocenter assembly. Binds nickel. Probably functions as a nickel donor during metallocenter assembly. This chain is Urease accessory protein UreE, found in Teredinibacter turnerae (strain ATCC 39867 / T7901).